Here is a 511-residue protein sequence, read N- to C-terminus: E3 ubiquitin-protein ligase TRIM7 (511 aa).

The RING-type zinc finger occupies 29-82 (CSICLELFREPVSVECGHSFCRACIGRCWERPGAGSVGAATRAPPFPLPCPQCR). S107 carries the phosphoserine; by RPS6KA5 modification. A B box-type zinc finger spans residues 125-166 (AAAARCGQHGEPFKLYCQDDGRAICVVCDRAREHREHAVLPL). 4 residues coordinate Zn(2+): C130, H133, C152, and H158. The stretch at 166-263 (LDEAVQEAKE…AQLGVEITQL (98 aa)) forms a coiled coil. Positions 324 to 511 (MLKKFKEDLR…STGTYLRIWP (188 aa)) constitute a B30.2/SPRY domain.

Belongs to the TRIM/RBCC family. As to quaternary structure, forms homodimers. Interacts with GNIP2. Interacts with GYG1. Interacts with RNF187 (via C-terminus). Phosphorylated at Ser-107 by RPS6KA5/MSK1, which stimulates the ubiquitin ligase activity. In terms of processing, auto-ubiquitinates via 'Lys-63'-linked polyubiquitination. In terms of tissue distribution, skeletal muscle and placenta, at lower levels in heart, brain and pancreas. Isoform 1 is widely expressed with high level in testis, kidney and heart.

The protein resides in the nucleus. Its subcellular location is the cytoplasm. The protein localises to the golgi apparatus. It catalyses the reaction S-ubiquitinyl-[E2 ubiquitin-conjugating enzyme]-L-cysteine + [acceptor protein]-L-lysine = [E2 ubiquitin-conjugating enzyme]-L-cysteine + N(6)-ubiquitinyl-[acceptor protein]-L-lysine.. It functions in the pathway protein modification; protein ubiquitination. Functionally, E3 ubiquitin-protein ligase that have both tumor-promoting and tumor-suppressing activities and functions in several biological processes including innate immunity, regulation of ferroptosis as well as cell proliferation and migration. Acts as an antiviral effector against multiple viruses by targeting specific viral proteins for ubiquitination and degradation including norovirus NTPase protein or SARS-CoV-2 NSP5 and NSP8 proteins. Mechanistically, recognizes the C-terminal glutamine-containing motif usually generated by viral proteases that process the polyproteins and trigger their ubiquitination and subsequent degradation. Mediates 'Lys-63'-linked polyubiquitination and stabilization of the JUN coactivator RNF187 in response to growth factor signaling via the MEK/ERK pathway, thereby regulating JUN transactivation and cellular proliferation. Promotes the TLR4-mediated signaling activation through its E3 ligase domain leading to production of pro-inflammatory cytokines and type I interferon. Also plays a negative role in the regulation of exogenous cytosolic DNA virus-triggered immune response. Mechanistically, enhances the 'Lys-48'-linked ubiquitination of STING1 leading to its proteasome-dependent degradation. Mediates the ubiquitination of the SIN3-HDAC chromatin remodeling complex component BRMS1. Modulates NCOA4-mediated ferritinophagy and ferroptosis in glioblastoma cells by ubiquitinating NCOA4, leading to its degradation. (Microbial infection) Promotes Zika virus replication by mediating envelope protein E ubiquitination. In Homo sapiens (Human), this protein is E3 ubiquitin-protein ligase TRIM7 (TRIM7).